The chain runs to 394 residues: Probable tRNA sulfurtransferase (394 aa).

The region spanning 61–168 (DETVATLSRI…PMINIYSEEI (108 aa)) is the THUMP domain. ATP-binding positions include 185 to 186 (LL), 210 to 211 (YF), R267, G289, and Q298.

The protein belongs to the ThiI family.

Its subcellular location is the cytoplasm. The enzyme catalyses [ThiI sulfur-carrier protein]-S-sulfanyl-L-cysteine + a uridine in tRNA + 2 reduced [2Fe-2S]-[ferredoxin] + ATP + H(+) = [ThiI sulfur-carrier protein]-L-cysteine + a 4-thiouridine in tRNA + 2 oxidized [2Fe-2S]-[ferredoxin] + AMP + diphosphate. It carries out the reaction [ThiS sulfur-carrier protein]-C-terminal Gly-Gly-AMP + S-sulfanyl-L-cysteinyl-[cysteine desulfurase] + AH2 = [ThiS sulfur-carrier protein]-C-terminal-Gly-aminoethanethioate + L-cysteinyl-[cysteine desulfurase] + A + AMP + 2 H(+). It functions in the pathway cofactor biosynthesis; thiamine diphosphate biosynthesis. Functionally, catalyzes the ATP-dependent transfer of a sulfur to tRNA to produce 4-thiouridine in position 8 of tRNAs, which functions as a near-UV photosensor. Also catalyzes the transfer of sulfur to the sulfur carrier protein ThiS, forming ThiS-thiocarboxylate. This is a step in the synthesis of thiazole, in the thiamine biosynthesis pathway. The sulfur is donated as persulfide by IscS. In Agathobacter rectalis (strain ATCC 33656 / DSM 3377 / JCM 17463 / KCTC 5835 / VPI 0990) (Eubacterium rectale), this protein is Probable tRNA sulfurtransferase.